Consider the following 345-residue polypeptide: Methylthioribose-1-phosphate isomerase (345 aa).

Residues 44-46 (RGA), Arg86, and Gln194 contribute to the substrate site. The Proton donor role is filled by Asp235. Residue 245 to 246 (NK) participates in substrate binding.

The protein belongs to the eIF-2B alpha/beta/delta subunits family. MtnA subfamily.

It catalyses the reaction 5-(methylsulfanyl)-alpha-D-ribose 1-phosphate = 5-(methylsulfanyl)-D-ribulose 1-phosphate. It functions in the pathway amino-acid biosynthesis; L-methionine biosynthesis via salvage pathway; L-methionine from S-methyl-5-thio-alpha-D-ribose 1-phosphate: step 1/6. Catalyzes the interconversion of methylthioribose-1-phosphate (MTR-1-P) into methylthioribulose-1-phosphate (MTRu-1-P). This chain is Methylthioribose-1-phosphate isomerase, found in Desulfitobacterium hafniense (strain DSM 10664 / DCB-2).